The chain runs to 85 residues: CRISPR-associated endoribonuclease Cas2 (85 aa).

D8 serves as a coordination point for Mg(2+).

It belongs to the CRISPR-associated endoribonuclease Cas2 protein family. As to quaternary structure, homodimer, forms a heterotetramer with a Cas1 homodimer. Requires Mg(2+) as cofactor.

In terms of biological role, CRISPR (clustered regularly interspaced short palindromic repeat), is an adaptive immune system that provides protection against mobile genetic elements (viruses, transposable elements and conjugative plasmids). CRISPR clusters contain sequences complementary to antecedent mobile elements and target invading nucleic acids. CRISPR clusters are transcribed and processed into CRISPR RNA (crRNA). Functions as a ssRNA-specific endoribonuclease. Involved in the integration of spacer DNA into the CRISPR cassette. The chain is CRISPR-associated endoribonuclease Cas2 from Thermococcus kodakarensis (strain ATCC BAA-918 / JCM 12380 / KOD1) (Pyrococcus kodakaraensis (strain KOD1)).